Consider the following 145-residue polypeptide: D-aminoacyl-tRNA deacylase (145 aa).

Positions 137-138 match the Gly-cisPro motif, important for rejection of L-amino acids motif; that stretch reads GP.

Belongs to the DTD family. In terms of assembly, homodimer.

The protein localises to the cytoplasm. It carries out the reaction glycyl-tRNA(Ala) + H2O = tRNA(Ala) + glycine + H(+). The catalysed reaction is a D-aminoacyl-tRNA + H2O = a tRNA + a D-alpha-amino acid + H(+). In terms of biological role, an aminoacyl-tRNA editing enzyme that deacylates mischarged D-aminoacyl-tRNAs. Also deacylates mischarged glycyl-tRNA(Ala), protecting cells against glycine mischarging by AlaRS. Acts via tRNA-based rather than protein-based catalysis; rejects L-amino acids rather than detecting D-amino acids in the active site. By recycling D-aminoacyl-tRNA to D-amino acids and free tRNA molecules, this enzyme counteracts the toxicity associated with the formation of D-aminoacyl-tRNA entities in vivo and helps enforce protein L-homochirality. This Pelobacter propionicus (strain DSM 2379 / NBRC 103807 / OttBd1) protein is D-aminoacyl-tRNA deacylase.